We begin with the raw amino-acid sequence, 975 residues long: Synaptopodin 2-like protein (975 aa).

In terms of domain architecture, PDZ spans 6-85; that stretch reads EVQVTLAGGA…QLVLTVRRVT (80 aa). 3 disordered regions span residues 18–41, 86–214, and 314–349; these read GFRL…QAGR, DEGS…PAEA, and AGTG…QSDW. Phosphoserine is present on residues Ser105 and Ser108. Thr138 carries the phosphothreonine modification. 4 positions are modified to phosphoserine: Ser140, Ser163, Ser175, and Ser177. A compositionally biased stretch (polar residues) spans 187–200; the sequence is GSPSQGDSRVSSPS. Low complexity predominate over residues 202–214; the sequence is EEGAALQPPPAEA. Over residues 339-349 the composition is skewed to polar residues; the sequence is DARSLTNQSDW. 5 positions are modified to phosphoserine: Ser342, Ser347, Ser371, Ser378, and Ser381. Arg383, Arg463, Arg466, and Arg476 each carry omega-N-methylarginine. Positions 491–649 are disordered; sequence KVNEGLGSTS…ETKNSPNPEL (159 aa). The segment covering 502–516 has biased composition (pro residues); sequence APSPFAAPPQGPTPL. The segment covering 519-528 has biased composition (polar residues); that stretch reads FTTVVPSHTP. 2 stretches are compositionally biased toward low complexity: residues 530-540 and 571-580; these read SGASSSTQRSS and SAAAMTSTAS. Phosphoserine occurs at positions 667 and 675. Residues 687–731 are disordered; the sequence is LGGRSYKTLPQVSPKTPPPMAPKTPPPTTPKTPPPVAPKPGSRGL. The span at 701–724 shows a compositional bias: pro residues; that stretch reads KTPPPMAPKTPPPTTPKTPPPVAP. Thr702 and Thr710 each carry phosphothreonine. Arg754 carries the omega-N-methylarginine modification. The disordered stretch occupies residues 772 to 797; the sequence is EATSGSSLNPGLRPRSPSPTPSLPPS. A phosphoserine mark is found at Ser787 and Ser789. Thr791 carries the phosphothreonine modification. Arg805, Arg825, and Arg888 each carry omega-N-methylarginine. At Ser890 the chain carries Phosphoserine. A phosphothreonine mark is found at Thr891 and Thr897. Arg909 carries the post-translational modification Omega-N-methylarginine. At Arg920 the chain carries Asymmetric dimethylarginine; alternate. Residue Arg920 is modified to Omega-N-methylarginine; alternate. 2 positions are modified to omega-N-methylarginine: Arg953 and Arg955.

The protein belongs to the synaptopodin family.

The protein localises to the cytoplasm. Its subcellular location is the cytoskeleton. Actin-associated protein that may play a role in modulating actin-based shape. The protein is Synaptopodin 2-like protein (Synpo2l) of Mus musculus (Mouse).